The following is a 308-amino-acid chain: NAD kinase (308 aa).

D86 acts as the Proton acceptor in catalysis. NAD(+) contacts are provided by residues 86 to 87 (DG), R91, 160 to 161 (NE), D190, and 201 to 206 (TAYAFS).

It belongs to the NAD kinase family. It depends on a divalent metal cation as a cofactor.

Its subcellular location is the cytoplasm. It catalyses the reaction NAD(+) + ATP = ADP + NADP(+) + H(+). In terms of biological role, involved in the regulation of the intracellular balance of NAD and NADP, and is a key enzyme in the biosynthesis of NADP. Catalyzes specifically the phosphorylation on 2'-hydroxyl of the adenosine moiety of NAD to yield NADP. The polypeptide is NAD kinase (Mycolicibacterium paratuberculosis (strain ATCC BAA-968 / K-10) (Mycobacterium paratuberculosis)).